A 274-amino-acid polypeptide reads, in one-letter code: NH(3)-dependent NAD(+) synthetase (274 aa).

46 to 53 (GISGGQDS) is a binding site for ATP. D52 contacts Mg(2+). R140 is a deamido-NAD(+) binding site. T160 contributes to the ATP binding site. E165 is a binding site for Mg(2+). Residues K173 and D180 each contribute to the deamido-NAD(+) site. 2 residues coordinate ATP: K189 and T211. 260-261 (HK) is a deamido-NAD(+) binding site.

The protein belongs to the NAD synthetase family. In terms of assembly, homodimer.

It carries out the reaction deamido-NAD(+) + NH4(+) + ATP = AMP + diphosphate + NAD(+) + H(+). Its pathway is cofactor biosynthesis; NAD(+) biosynthesis; NAD(+) from deamido-NAD(+) (ammonia route): step 1/1. Catalyzes the ATP-dependent amidation of deamido-NAD to form NAD. Uses ammonia as a nitrogen source. This chain is NH(3)-dependent NAD(+) synthetase, found in Streptococcus pneumoniae serotype 2 (strain D39 / NCTC 7466).